Here is a 504-residue protein sequence, read N- to C-terminus: Glycerol kinase (504 aa).

Threonine 12 lines the ADP pocket. The ATP site is built by threonine 12, threonine 13, and serine 14. Residue threonine 12 participates in sn-glycerol 3-phosphate binding. Arginine 16 provides a ligand contact to ADP. Sn-glycerol 3-phosphate is bound by residues arginine 82, glutamate 83, tyrosine 134, and aspartate 246. Positions 82, 83, 134, 246, and 247 each coordinate glycerol. The ADP site is built by threonine 268 and glycine 312. Threonine 268, glycine 312, glutamine 316, and glycine 413 together coordinate ATP. Residues glycine 413 and asparagine 417 each coordinate ADP.

This sequence belongs to the FGGY kinase family.

The catalysed reaction is glycerol + ATP = sn-glycerol 3-phosphate + ADP + H(+). Its pathway is polyol metabolism; glycerol degradation via glycerol kinase pathway; sn-glycerol 3-phosphate from glycerol: step 1/1. With respect to regulation, inhibited by fructose 1,6-bisphosphate (FBP). In terms of biological role, key enzyme in the regulation of glycerol uptake and metabolism. Catalyzes the phosphorylation of glycerol to yield sn-glycerol 3-phosphate. This Pseudarthrobacter chlorophenolicus (strain ATCC 700700 / DSM 12829 / CIP 107037 / JCM 12360 / KCTC 9906 / NCIMB 13794 / A6) (Arthrobacter chlorophenolicus) protein is Glycerol kinase.